The following is an 82-amino-acid chain: ATP synthase subunit c, chloroplastic (82 aa).

2 consecutive transmembrane segments (helical) span residues 7 to 27 (GASVIAAGLAIGLASIGPGIG) and 57 to 77 (LAFMESLTIYGLVVALCLLFA).

It belongs to the ATPase C chain family. As to quaternary structure, F-type ATPases have 2 components, F(1) - the catalytic core - and F(0) - the membrane proton channel. F(1) has five subunits: alpha(3), beta(3), gamma(1), delta(1), epsilon(1). F(0) has four main subunits: a(1), b(1), b'(1) and c(10-14). The alpha and beta chains form an alternating ring which encloses part of the gamma chain. F(1) is attached to F(0) by a central stalk formed by the gamma and epsilon chains, while a peripheral stalk is formed by the delta, b and b' chains.

The protein localises to the plastid. The protein resides in the chloroplast thylakoid membrane. Its function is as follows. F(1)F(0) ATP synthase produces ATP from ADP in the presence of a proton or sodium gradient. F-type ATPases consist of two structural domains, F(1) containing the extramembraneous catalytic core and F(0) containing the membrane proton channel, linked together by a central stalk and a peripheral stalk. During catalysis, ATP synthesis in the catalytic domain of F(1) is coupled via a rotary mechanism of the central stalk subunits to proton translocation. In terms of biological role, key component of the F(0) channel; it plays a direct role in translocation across the membrane. A homomeric c-ring of between 10-14 subunits forms the central stalk rotor element with the F(1) delta and epsilon subunits. This Emiliania huxleyi (Coccolithophore) protein is ATP synthase subunit c, chloroplastic.